The chain runs to 372 residues: Cobalt-precorrin-5B C(1)-methyltransferase (372 aa).

The protein belongs to the CbiD family.

The enzyme catalyses Co-precorrin-5B + S-adenosyl-L-methionine = Co-precorrin-6A + S-adenosyl-L-homocysteine. It functions in the pathway cofactor biosynthesis; adenosylcobalamin biosynthesis; cob(II)yrinate a,c-diamide from sirohydrochlorin (anaerobic route): step 6/10. Catalyzes the methylation of C-1 in cobalt-precorrin-5B to form cobalt-precorrin-6A. In Prochlorococcus marinus (strain MIT 9515), this protein is Cobalt-precorrin-5B C(1)-methyltransferase.